Here is a 71-residue protein sequence, read N- to C-terminus: Palustrin-Ca (71 aa).

The signal sequence occupies residues 1-22 (MFTLKKSLLLLFFLGTISLSLC). Positions 23–40 (EQERDADGDEGEVEEVKR) are excised as a propeptide. Cysteines 63 and 69 form a disulfide.

It belongs to the frog skin active peptide (FSAP) family. Brevinin subfamily. As to expression, expressed by the skin glands.

The protein resides in the secreted. It is found in the target cell membrane. Its function is as follows. Antibacterial peptide with amphipathic alpha-helical structure that exhibits potent broad-spectrum activity against Gram-positive and -negative bacteria. It is active against Listeria ATCC 54004 (MIC=30 ug/ml), S.aureus ATCC 25923 (MIC=7.8 ug/ml), S.suis 2 CVCC 606 (MIC=31.25 ug/ml), B.subtilis ADB403 (30 ug/ml), K.pneumoniae ATCC 700603 (MIC=60 ug/ml) and P.aeruginosa ATCC 227853 (MIC=30 ug/ml). Does not show activity against Salmonella ATCC 20020 and the fungus Candida albicans. Is also cytotoxic to HeLa cells at high concentrations. In addition, shows a strong antitumor activity but only a little hemolytic activity. Despite the presence of a Gly residue at position 10, this alpha-helical peptide remains relatively rigid, not exhibiting any significant flexibility during the molecular dynamics simulation. The peptide shows a preference for a position parallel to the target membrane that suggests it exerts its antimicrobial activity through a non-pore-forming mechanism of action, such as the carpet model or the interfacial activity model. In Aquarana catesbeiana (American bullfrog), this protein is Palustrin-Ca.